Reading from the N-terminus, the 429-residue chain is Glutamate-1-semialdehyde 2,1-aminomutase 2 (429 aa).

N6-(pyridoxal phosphate)lysine is present on Lys-268.

The protein belongs to the class-III pyridoxal-phosphate-dependent aminotransferase family. HemL subfamily. As to quaternary structure, homodimer. It depends on pyridoxal 5'-phosphate as a cofactor.

The protein resides in the cytoplasm. It carries out the reaction (S)-4-amino-5-oxopentanoate = 5-aminolevulinate. Its pathway is porphyrin-containing compound metabolism; protoporphyrin-IX biosynthesis; 5-aminolevulinate from L-glutamyl-tRNA(Glu): step 2/2. In Staphylococcus aureus (strain MRSA252), this protein is Glutamate-1-semialdehyde 2,1-aminomutase 2.